We begin with the raw amino-acid sequence, 349 residues long: MVTYKDAGVDIYKEDKVIRALASQIKFERNDAIKPADLKGHYAGAIEFGDYYLVLCTDGVGSKMVVAEMANKFDTVPIDMIAMNVNDAICIGAEPVALVDYMAVEDITEDIASQIGKGLNDGIKESNINLIGGETASLPNMIKGVDLAGTVLAVVKKDEIVSGKEVKPGDLIVGLRSSGIHSNGLSLARKVFFDIANLDVNSKLSHGKTVAEELLTPTKIYVKPVLEMIKQVNVKGLAHITGGGFRKLKRLNKEVCYKIDELPEILPIFKEIQNLGSVADEEMFKTFNMGIGFCVIVDKEDAEKIIEISNHHNIPAFVIGKIEDSVELNGETKRETVLVEYNNKKMIME.

Belongs to the AIR synthase family.

It is found in the cytoplasm. It carries out the reaction 2-formamido-N(1)-(5-O-phospho-beta-D-ribosyl)acetamidine + ATP = 5-amino-1-(5-phospho-beta-D-ribosyl)imidazole + ADP + phosphate + H(+). Its pathway is purine metabolism; IMP biosynthesis via de novo pathway; 5-amino-1-(5-phospho-D-ribosyl)imidazole from N(2)-formyl-N(1)-(5-phospho-D-ribosyl)glycinamide: step 2/2. This is Phosphoribosylformylglycinamidine cyclo-ligase from Methanococcus maripaludis (strain C5 / ATCC BAA-1333).